The chain runs to 550 residues: ATP-dependent RNA helicase dbp2 (550 aa).

Positions 1 to 25 are disordered; that stretch reads MSYRDNEYSGNYNGKEDGYNSRGRY. The Q motif motif lies at 122-150; the sequence is TTFEEAGFPNYVLKEVKQLGFEAPTPIQQ. In terms of domain architecture, Helicase ATP-binding spans 153-328; it reads WPMAMSGRDM…RDYLNDYIQV (176 aa). Residue 166–173 coordinates ATP; it reads SATGSGKT. Positions 276–279 match the DEAD box motif; that stretch reads DEAD. Residues 340–503 enclose the Helicase C-terminal domain; it reads NIKQIVEVVD…DIDPKLEEMA (164 aa). The interval 510–533 is RNA-binding RGG-box; it reads RGGNYRRGGYGRGGFRRGGGYGNR. Residues 525-550 form a disordered region; that stretch reads RRGGGYGNRNRGFTGSNSAPLARSRW.

The protein belongs to the DEAD box helicase family. DDX5/DBP2 subfamily. Associates with polysomes.

Its subcellular location is the cytoplasm. The protein localises to the nucleus. It catalyses the reaction ATP + H2O = ADP + phosphate + H(+). Functionally, ATP-dependent RNA helicase involved nonsense-mediated mRNA decay and ribosome biogenesis through rRNA processing. This chain is ATP-dependent RNA helicase dbp2 (dbp2), found in Schizosaccharomyces pombe (strain 972 / ATCC 24843) (Fission yeast).